The primary structure comprises 633 residues: Threonine--tRNA ligase (633 aa).

The TGS domain occupies 1–61 (MINIHFSNNL…IENCTFEVIT (61 aa)). The interval 242–533 (DHRKIGRELE…LIEHHSGKFP (292 aa)) is catalytic. Zn(2+) is bound by residues C333, H384, and H510.

Belongs to the class-II aminoacyl-tRNA synthetase family. Homodimer. The cofactor is Zn(2+).

It is found in the cytoplasm. The catalysed reaction is tRNA(Thr) + L-threonine + ATP = L-threonyl-tRNA(Thr) + AMP + diphosphate + H(+). Its function is as follows. Catalyzes the attachment of threonine to tRNA(Thr) in a two-step reaction: L-threonine is first activated by ATP to form Thr-AMP and then transferred to the acceptor end of tRNA(Thr). Also edits incorrectly charged L-seryl-tRNA(Thr). In Ehrlichia chaffeensis (strain ATCC CRL-10679 / Arkansas), this protein is Threonine--tRNA ligase.